The primary structure comprises 338 residues: Mycothiol acetyltransferase (338 aa).

N-acetyltransferase domains lie at 29–173 (PETY…HQLP) and 181–338 (ISLR…NKFQ). A 1D-myo-inositol 2-(L-cysteinylamino)-2-deoxy-alpha-D-glucopyranoside-binding site is contributed by D55. An acetyl-CoA-binding site is contributed by 105–107 (LVV). Residues E208, K248, and E261 each coordinate 1D-myo-inositol 2-(L-cysteinylamino)-2-deoxy-alpha-D-glucopyranoside. Acetyl-CoA contacts are provided by residues 265 to 267 (VGI) and 272 to 278 (QGKGLGK). Residue Y299 participates in 1D-myo-inositol 2-(L-cysteinylamino)-2-deoxy-alpha-D-glucopyranoside binding.

Belongs to the acetyltransferase family. MshD subfamily. Monomer.

It carries out the reaction 1D-myo-inositol 2-(L-cysteinylamino)-2-deoxy-alpha-D-glucopyranoside + acetyl-CoA = mycothiol + CoA + H(+). Its function is as follows. Catalyzes the transfer of acetyl from acetyl-CoA to desacetylmycothiol (Cys-GlcN-Ins) to form mycothiol. This chain is Mycothiol acetyltransferase, found in Renibacterium salmoninarum (strain ATCC 33209 / DSM 20767 / JCM 11484 / NBRC 15589 / NCIMB 2235).